The chain runs to 89 residues: MSRTVFCCKLKQEAEGLEKQPFPGELGKKVFNEVSKQAWNMWLSHQTMLINEYRLNLIEARAREFLKEEMQKYFFGEGSEKPSGYKEIK.

This sequence belongs to the Fe(2+)-trafficking protein family.

Could be a mediator in iron transactions between iron acquisition and iron-requiring processes, such as synthesis and/or repair of Fe-S clusters in biosynthetic enzymes. This is Probable Fe(2+)-trafficking protein from Legionella pneumophila (strain Paris).